The primary structure comprises 155 residues: Ribosomal RNA large subunit methyltransferase H (155 aa).

S-adenosyl-L-methionine-binding positions include L73, G104, and 123 to 128 (LSPLTL).

Belongs to the RNA methyltransferase RlmH family. As to quaternary structure, homodimer.

The protein resides in the cytoplasm. The enzyme catalyses pseudouridine(1915) in 23S rRNA + S-adenosyl-L-methionine = N(3)-methylpseudouridine(1915) in 23S rRNA + S-adenosyl-L-homocysteine + H(+). Specifically methylates the pseudouridine at position 1915 (m3Psi1915) in 23S rRNA. The protein is Ribosomal RNA large subunit methyltransferase H of Pseudomonas putida (strain GB-1).